A 90-amino-acid chain; its full sequence is Small ribosomal subunit protein uS15 (90 aa).

The protein belongs to the universal ribosomal protein uS15 family. In terms of assembly, part of the 30S ribosomal subunit. Forms a bridge to the 50S subunit in the 70S ribosome, contacting the 23S rRNA.

Its function is as follows. One of the primary rRNA binding proteins, it binds directly to 16S rRNA where it helps nucleate assembly of the platform of the 30S subunit by binding and bridging several RNA helices of the 16S rRNA. Forms an intersubunit bridge (bridge B4) with the 23S rRNA of the 50S subunit in the ribosome. The sequence is that of Small ribosomal subunit protein uS15 from Campylobacter hominis (strain ATCC BAA-381 / DSM 21671 / CCUG 45161 / LMG 19568 / NCTC 13146 / CH001A).